The primary structure comprises 351 residues: AA9 family lytic polysaccharide monooxygenase A (351 aa).

The first 20 residues, 1–20 (MSNKAATLLAALSGAALVAA), serve as a signal peptide directing secretion. Positions 21 and 107 each coordinate Cu(2+). An intrachain disulfide couples Cys-76 to Cys-196. Residues His-182 and Gln-191 each contribute to the O2 site. Tyr-193 is a binding site for Cu(2+). In terms of domain architecture, CBM1 spans 315-351 (GVAPKWGQCGGNGWTGPTVCASGSTCTVLNPYYSQCI).

It belongs to the polysaccharide monooxygenase AA9 family. Cu(2+) is required as a cofactor.

The protein resides in the secreted. It carries out the reaction [(1-&gt;4)-beta-D-glucosyl]n+m + reduced acceptor + O2 = 4-dehydro-beta-D-glucosyl-[(1-&gt;4)-beta-D-glucosyl]n-1 + [(1-&gt;4)-beta-D-glucosyl]m + acceptor + H2O.. Its function is as follows. Lytic polysaccharide monooxygenase (LPMO) that depolymerizes crystalline and amorphous polysaccharides via the oxidation of scissile alpha- or beta-(1-4)-glycosidic bonds, yielding C1 and C4 oxidation products. Catalysis by LPMOs requires the reduction of the active-site copper from Cu(II) to Cu(I) by a reducing agent and H(2)O(2) or O(2) as a cosubstrate. This Podospora anserina (strain S / ATCC MYA-4624 / DSM 980 / FGSC 10383) (Pleurage anserina) protein is AA9 family lytic polysaccharide monooxygenase A.